The chain runs to 549 residues: MATKLARLATWLVLVGCLLWRAGAVQLSPPNSRTNDLASGTPHVARGDTEAQSGTGDDSDFPQAVVEEVADMSGGRVPRVPASSTTTSASEGIFRRLVRRLRRGRGTADGAGVADETHQGPRPPLRKRLAQHFRRLRGFFGRLTPRWLSGLGRRAQRWWRGRQRPLLDPSFHGLEAGDSFMRDLLKREEELIGYCREEALKEPAAMVEAVTATVWPQNAETTVDSLLSQGERKLKLVEPLRVGDRSVVFLVRDVERLEDFALKVFTMGAENSRSELERLHEATFAAARLLGESPEEARDRRRLLLPSDAVAVQSQPPFAQLSPGQDDYAVANYLLLMPAASVDLELLFSTLDFVYVFRGDEGILALHILTAQLIRLAANLQSKGLVHGHFTPDNLFIMPDGRLMLGDVSALWKVGTRGPASSVPVTYAPREFLNASTATFTHALNAWQLGLSIYRVWCLFLPFGLVTPGIKGSWKRPSLRVPGTDSLAFGSCTPLPDFVKTLIGRFLNFDRRRRLLPLEAMETPEFLQLQNEISSSLSTGQPTAAPSVA.

The signal sequence occupies residues 1 to 24 (MATKLARLATWLVLVGCLLWRAGA). In terms of domain architecture, Protein kinase spans 234-527 (LKLVEPLRVG…LEAMETPEFL (294 aa)). ATP contacts are provided by Arg241, Asp244, Arg245, Ser246, Lys263, Met337, Pro338, Ala340, Asp343, and Asp393. Asp244 provides a ligand contact to ADP. Residues Ser246, Lys263, Met337, Pro338, and Ala340 each contribute to the ADP site. Asp393 contacts ADP. Mg(2+) is bound by residues Asp393 and Asp407. Asn434 carries N-linked (GlcNAc...) asparagine glycosylation. Cys458 and Cys492 form a disulfide bridge.

This sequence belongs to the protein kinase superfamily. Ser/Thr protein kinase family. In terms of assembly, component of a complex at least composed of ROP18 and ROP5. Interacts with GRA7. Interacts with ROP17. Interacts with mouse IRGA6/IIGP1; the interaction results in inhibition of IRGA6/IIGP1 GTPase activity and/or oligomerization.

The protein localises to the secreted. It localises to the parasitophorous vacuole. It is found in the cytoplasmic vesicle. Its subcellular location is the secretory vesicle. The protein resides in the rhoptry. Its function is as follows. Pseudokinase. Essential for virulence in the type I lineage. Mediates parasite survival in mouse monocytes. Required for the parasite ability to resist mouse innate immune effectors triggered by the IFN-gamma (IFNG). Reduces the accumulation of mouse IRGA6 (IIGP1) and IRGB6 (TGTP1/TGTP2), immunity-related GTPases (IRGs) that protect mice from infection by certain intracellular pathogens, on the parasitophorous vacuole and IRG-mediated killing of parasites by mouse cells. Regulates the activity of ROP18, an active kinase that targets IRGs to prevent IRG-mediated parasite killing by mouse cells. Acts as an allosteric inhibitor of mouse IRGA6 (IIGP1). Does not affect IFN-gamma (IFNG)-mediated parasite killing in human cells that do not possess the large variety of IRGs. The polypeptide is Polymorphic pseudokinase ROP5 (Toxoplasma gondii).